A 218-amino-acid chain; its full sequence is Capsid protein (218 aa).

An N-acetylmethionine; by host modification is found at Met-1. The segment covering 1-10 (MDKSESTSAG) has biased composition (low complexity). Residues 1–29 (MDKSESTSAGRNRRRRLRRGSRSAPSSAD) are disordered. Positions 11–21 (RNRRRRLRRGS) are enriched in basic residues.

It belongs to the cucumovirus capsid protein family.

It localises to the virion. Capsid protein. Probably binds RNA and plays a role in packaging. The chain is Capsid protein from Cucumis sativus (Cucumber).